The sequence spans 104 residues: uncharacterized protein (104 aa).

2 consecutive transmembrane segments (helical) span residues 16-36 (LAFF…LASY) and 44-64 (GGFG…FLCI).

The protein resides in the cell membrane. This is an uncharacterized protein from Bacillus anthracis.